A 482-amino-acid polypeptide reads, in one-letter code: tRNA sulfurtransferase (482 aa).

Residues 61–165 (EAIRDALTRI…QDRLLLIKSR (105 aa)) form the THUMP domain. ATP is bound by residues 183-184 (LI), Lys265, Gly287, and Gln296. Residues Cys344 and Cys456 are joined by a disulfide bond. Positions 404-482 (FVPTDVLLDI…GFSNVKVYRP (79 aa)) constitute a Rhodanese domain. Cys456 (cysteine persulfide intermediate) is an active-site residue.

Belongs to the ThiI family.

The protein localises to the cytoplasm. The enzyme catalyses [ThiI sulfur-carrier protein]-S-sulfanyl-L-cysteine + a uridine in tRNA + 2 reduced [2Fe-2S]-[ferredoxin] + ATP + H(+) = [ThiI sulfur-carrier protein]-L-cysteine + a 4-thiouridine in tRNA + 2 oxidized [2Fe-2S]-[ferredoxin] + AMP + diphosphate. It catalyses the reaction [ThiS sulfur-carrier protein]-C-terminal Gly-Gly-AMP + S-sulfanyl-L-cysteinyl-[cysteine desulfurase] + AH2 = [ThiS sulfur-carrier protein]-C-terminal-Gly-aminoethanethioate + L-cysteinyl-[cysteine desulfurase] + A + AMP + 2 H(+). It functions in the pathway cofactor biosynthesis; thiamine diphosphate biosynthesis. Functionally, catalyzes the ATP-dependent transfer of a sulfur to tRNA to produce 4-thiouridine in position 8 of tRNAs, which functions as a near-UV photosensor. Also catalyzes the transfer of sulfur to the sulfur carrier protein ThiS, forming ThiS-thiocarboxylate. This is a step in the synthesis of thiazole, in the thiamine biosynthesis pathway. The sulfur is donated as persulfide by IscS. This Pectobacterium atrosepticum (strain SCRI 1043 / ATCC BAA-672) (Erwinia carotovora subsp. atroseptica) protein is tRNA sulfurtransferase.